We begin with the raw amino-acid sequence, 419 residues long: Serine hydroxymethyltransferase (419 aa).

Residues L122 and 126–128 each bind (6S)-5,6,7,8-tetrahydrofolate; that span reads GHL. K231 carries the N6-(pyridoxal phosphate)lysine modification. Residue 354-356 participates in (6S)-5,6,7,8-tetrahydrofolate binding; sequence SPF.

It belongs to the SHMT family. As to quaternary structure, homodimer. Pyridoxal 5'-phosphate is required as a cofactor.

It is found in the cytoplasm. It carries out the reaction (6R)-5,10-methylene-5,6,7,8-tetrahydrofolate + glycine + H2O = (6S)-5,6,7,8-tetrahydrofolate + L-serine. It participates in one-carbon metabolism; tetrahydrofolate interconversion. Its pathway is amino-acid biosynthesis; glycine biosynthesis; glycine from L-serine: step 1/1. Functionally, catalyzes the reversible interconversion of serine and glycine with tetrahydrofolate (THF) serving as the one-carbon carrier. This reaction serves as the major source of one-carbon groups required for the biosynthesis of purines, thymidylate, methionine, and other important biomolecules. Also exhibits THF-independent aldolase activity toward beta-hydroxyamino acids, producing glycine and aldehydes, via a retro-aldol mechanism. The polypeptide is Serine hydroxymethyltransferase (Exiguobacterium sibiricum (strain DSM 17290 / CCUG 55495 / CIP 109462 / JCM 13490 / 255-15)).